The sequence spans 563 residues: Bifunctional dihydrofolate reductase-thymidylate synthase (563 aa).

Positions 3–195 (KFNIIAAINN…ILLRFQEYSV (193 aa)) constitute a DHFR domain. 117–124 (GGGVIYDL) is an NADP(+) binding site. Residues 275 to 563 (YIELVKTIME…CPSISAEMIA (289 aa)) form a thymidylate synthase region. R292 contributes to the dUMP binding site. C435 is an active-site residue. Residues H436, 464 to 468 (QRSWD), N474, and 504 to 506 (HIY) each bind dUMP.

The protein in the N-terminal section; belongs to the dihydrofolate reductase family. This sequence in the C-terminal section; belongs to the thymidylate synthase family.

It catalyses the reaction (6S)-5,6,7,8-tetrahydrofolate + NADP(+) = 7,8-dihydrofolate + NADPH + H(+). The enzyme catalyses dUMP + (6R)-5,10-methylene-5,6,7,8-tetrahydrofolate = 7,8-dihydrofolate + dTMP. It functions in the pathway cofactor biosynthesis; tetrahydrofolate biosynthesis; 5,6,7,8-tetrahydrofolate from 7,8-dihydrofolate: step 1/1. Its function is as follows. Bifunctional enzyme. Involved in de novo dTMP biosynthesis. Key enzyme in folate metabolism. Catalyzes an essential reaction for de novo glycine and purine synthesis, DNA precursor synthesis, and for the conversion of dUMP to dTMP. This chain is Bifunctional dihydrofolate reductase-thymidylate synthase, found in Acanthamoeba polyphaga mimivirus (APMV).